We begin with the raw amino-acid sequence, 28 residues long: trp operon leader peptide (28 aa).

This protein is involved in control of the biosynthesis of tryptophan. This is trp operon leader peptide (trpL) from Serratia marcescens.